Here is a 39-residue protein sequence, read N- to C-terminus: Bacteriocin E50-52 (39 aa).

The protein resides in the secreted. In terms of biological role, bacteriocin active against the Gram-negative bacteria C.jejuni, Y.enterocolitica and Y.pseudotuberculosis, and the Gram-positive bacteria S.aureus, S.epidermidis, L.monocytogenes and Listeria spp. When added to the drinking water of chickens, causes a decrease in the levels of C.jejuni and S.enteritidis in the ceca, and in the levels of S.enteritidis in the liver and spleen. The sequence is that of Bacteriocin E50-52 from Enterococcus faecium (Streptococcus faecium).